We begin with the raw amino-acid sequence, 574 residues long: Pyruvate kinase PKLR (574 aa).

4 positions are modified to phosphoserine: serine 2, serine 19, serine 26, and serine 43. Residue arginine 116 coordinates substrate. Residues asparagine 118, serine 120, aspartate 156, and threonine 157 each coordinate K(+). 118 to 121 (NFSH) is a binding site for ATP. 2 residues coordinate ATP: arginine 163 and lysine 250. Residue serine 292 is modified to Phosphoserine. A substrate-binding site is contributed by lysine 313. Glutamate 315 provides a ligand contact to Mn(2+). 3 residues coordinate substrate: glycine 338, aspartate 339, and threonine 371. Aspartate 339 provides a ligand contact to Mn(2+). Beta-D-fructose 1,6-bisphosphate contacts are provided by residues 475-480 (TTTGRS), tryptophan 525, arginine 532, and 559-564 (RPGSGY).

Belongs to the pyruvate kinase family. In terms of assembly, homotetramer. Mg(2+) serves as cofactor. Mn(2+) is required as a cofactor. Requires K(+) as cofactor.

The enzyme catalyses pyruvate + ATP = phosphoenolpyruvate + ADP + H(+). It participates in carbohydrate degradation; glycolysis; pyruvate from D-glyceraldehyde 3-phosphate: step 5/5. With respect to regulation, allosterically activated by fructose 1,6-bisphosphate. Functionally, pyruvate kinase that catalyzes the conversion of phosphoenolpyruvate to pyruvate with the synthesis of ATP, and which plays a key role in glycolysis. The polypeptide is Pyruvate kinase PKLR (PKLR) (Homo sapiens (Human)).